Consider the following 286-residue polypeptide: Short-chain dehydrogenase fogD (286 aa).

Residues Val-8, Thr-34, Asp-55, Tyr-147, Lys-151, Val-180, and Thr-182 each coordinate NADP(+). Catalysis depends on Tyr-147, which acts as the Proton acceptor. Residue Lys-151 is the Lowers pKa of active site Tyr of the active site.

It belongs to the short-chain dehydrogenases/reductases (SDR) family.

The protein operates within secondary metabolite biosynthesis. In terms of biological role, short-chain dehydrogenase; part of the gene cluster that mediates the biosynthesis of flavoglaucin and congeners (including aspergin, dihydroauroglaucin and auroglaucin), prenylated salicylaldehyde derivatives carrying a saturated or an unsaturated C-7 side chain. The PKS fogA releases the carboxylic acid (8E,10E,12E)-3,5,7-trihydroxytetradeca-8,10,12-trienoic acid as its product, as well as derivatives with one and two double bonds. FogA is indeed able to reduce the initial triketide, thus being at least partially responsible for the differently saturated heptyl side chains of flavoglaucin congeners. The oxidoreductases fogB, fogC and fogD modify the nascent polyketide in fogA-bound form and, together, fogA, fogB, fogC and fogD are necessary for the formation of the aromatic core and the cyclized PKS products are released as salicyl alcohols. In particular, fogB is responsible for oxidation of a hydroxyl group or reduction of remaining double bond(s) at the C-7 residue whereas fogD is probably involved in the reductive release of the modified PKS products. The cytochrome P450 monooxygenase fogE is then responsible for the hydroxylation at C-3 of the benzene ring. The fogE products are substrates of the prenyltransferase fogH and the prenylated benzyl alcohols are subsequently oxidized by the fogF to produce the final aryl aldehydes flavoglaucin and congeners. The short-chain dehydrogenase fogG does not seem to be involved in the biosynthesis of the prenylated salicylaldehyde derivatives. The protein is Short-chain dehydrogenase fogD of Aspergillus ruber (strain CBS 135680).